The following is a 393-amino-acid chain: Bifunctional enzyme Fae/Hps (393 aa).

A formaldehyde-activating enzyme region spans residues M1 to V161. H17 (proton donor) is an active-site residue. Substrate contacts are provided by D19, L48, K66, T68, and Q83. The interval M162–F393 is 3-hexulose-6-phosphate synthase.

The protein in the N-terminal section; belongs to the formaldehyde-activating enzyme family. In the C-terminal section; belongs to the HPS/KGPDC family. HPS subfamily.

The enzyme catalyses 5,6,7,8-tetrahydromethanopterin + formaldehyde = 5,10-methylenetetrahydromethanopterin + H2O. It carries out the reaction D-ribulose 5-phosphate + formaldehyde = D-arabino-hex-3-ulose 6-phosphate. It participates in carbohydrate biosynthesis; D-ribose 5-phosphate biosynthesis. Catalyzes the condensation of formaldehyde with tetrahydromethanopterin (H(4)MPT) to 5,10-methylenetetrahydromethanopterin. Its function is as follows. Catalyzes the reversible formation of ribulose-5-phosphate and formaldehyde from 3-hexulose-6-phosphate. The polypeptide is Bifunctional enzyme Fae/Hps (Methanosphaerula palustris (strain ATCC BAA-1556 / DSM 19958 / E1-9c)).